We begin with the raw amino-acid sequence, 812 residues long: Probable E3 ubiquitin-protein ligase hulA (812 aa).

The C2 domain occupies 1–109 (MTCSQPNLRV…QMGGDEMLTR (109 aa)). 2 disordered regions span residues 131–235 (NLST…WERR) and 250–350 (RTTT…YFVD). Composition is skewed to polar residues over residues 148–165 (MQPS…ASTP), 174–199 (ADPT…STIV), 214–223 (SRTNLSSFED), and 250–267 (RTTT…QTSR). Positions 226-259 (GRLPAGWERREDNLGRTYYVDHNTRTTTWTRPSN) constitute a WW 1 domain. Basic and acidic residues predominate over residues 276 to 291 (LERRAHQSRMLPEDRT). Residues 292 to 306 (GASSPNLQENQQQAQ) show a composition bias toward polar residues. The segment covering 307–330 (TPPAGGSASAVSMMATGATTAGTG) has biased composition (low complexity). WW domains lie at 330–363 (GELP…DPRR) and 390–423 (GPLP…DPRL). Positions 479–812 (SASDLKKRLM…VEETLGFGQE (334 aa)) constitute an HECT domain. C780 (glycyl thioester intermediate) is an active-site residue.

Belongs to the RSP5/NEDD4 family. In terms of assembly, interacts with creD.

It is found in the cytoplasm. The enzyme catalyses S-ubiquitinyl-[E2 ubiquitin-conjugating enzyme]-L-cysteine + [acceptor protein]-L-lysine = [E2 ubiquitin-conjugating enzyme]-L-cysteine + N(6)-ubiquitinyl-[acceptor protein]-L-lysine.. It participates in protein modification; protein ubiquitination. Its function is as follows. E3 ubiquitin-protein ligase which accepts ubiquitin from an E2 ubiquitin-conjugating enzyme in the form of a thioester and then directly transfers the ubiquitin to targeted substrates. Probably involved in the regulatory network controlling carbon source utilization. This Aspergillus flavus (strain ATCC 200026 / FGSC A1120 / IAM 13836 / NRRL 3357 / JCM 12722 / SRRC 167) protein is Probable E3 ubiquitin-protein ligase hulA (hulA).